A 400-amino-acid polypeptide reads, in one-letter code: Cytohesin-3 (400 aa).

Residues 14-61 (EDLSLEEREELLDIRRRKKELIDDIERLKYEIAEVMTEIDNLTSVEES) are a coiled coil. One can recognise an SEC7 domain in the interval 77 to 206 (FNMDPKKGIQ…IIMLNTSLHN (130 aa)). One can recognise a PH domain in the interval 264–381 (NPDREGWLLK…WMKSIKASIS (118 aa)). A 1,2-diacyl-sn-glycero-3-phospho-(1D-myo-inositol-3,4,5-trisphosphate) contacts are provided by residues 273-281 (KLGGGRVKT), R285, Y296, R306, and N355. A C-terminal autoinhibitory region region spans residues 392-400 (RKRRIANKK).

As to quaternary structure, interacts with TAMALIN. Interacts with ARF6. Interacts with FRMD4A. Interacts with FRMD4B. In terms of tissue distribution, almost absent from liver, thymus and peripheral blood lymphocytes.

The protein resides in the cytoplasm. The protein localises to the cytosol. It is found in the cell membrane. It localises to the cell junction. Its subcellular location is the adherens junction. The protein resides in the tight junction. Promotes guanine-nucleotide exchange on ARF1 and ARF6. Promotes the activation of ARF factors through replacement of GDP with GTP. Plays a role in the epithelial polarization. The protein is Cytohesin-3 of Homo sapiens (Human).